A 106-amino-acid polypeptide reads, in one-letter code: Ribosomal processing cysteine protease Prp (106 aa).

The Proton donor role is filled by His22. Cys34 functions as the Nucleophile in the catalytic mechanism.

Belongs to the Prp family. Homodimer. A mutant protein unable to cleave bL27 copurifies with its substrate.

With respect to regulation, not inhibited by short peptide analogs; a 6-mer inhibits only 20% while a 13-mer inhibits 63%. Inhibited by Ac-KLNLQFF-CH(2) which binds covalantly to Cys-34. Inhibited by mersalyl acid (C13H18HgNO6). Its function is as follows. An essential cysteine protease that cleaves the N-terminal 9 amino acids from ribosomal protein bL27. Also acts as an N-terminal protease on the major capsid and scaffold assembly proteins of bacteriophage 80alpha. Cleavage of the N-terminus of bL27 (and thus this enzyme) is essential for growth; it cannot be replaced by a 'pre-cleaved' or non-cleavable form of bL27. Might serve a chaperone function during ribosome assembly. The protein is Ribosomal processing cysteine protease Prp of Staphylococcus aureus (strain NCTC 8325 / PS 47).